The following is a 901-amino-acid chain: HTH-type transcriptional regulator MalT (901 aa).

39 to 46 (SPAGYGKT) is a binding site for ATP. The 66-residue stretch at 829–894 (ELIHTSPLTQ…AAVQHAQKLL (66 aa)) folds into the HTH luxR-type domain. The H-T-H motif DNA-binding region spans 853 to 872 (NEQIAGELEVAATTIKTHIR).

Belongs to the MalT family. Monomer in solution. Oligomerizes to an active state in the presence of the positive effectors ATP and maltotriose.

Activated by ATP and maltotriose, which are both required for DNA binding. Its function is as follows. Positively regulates the transcription of the maltose regulon whose gene products are responsible for uptake and catabolism of malto-oligosaccharides. Specifically binds to the promoter region of its target genes, recognizing a short DNA motif called the MalT box. In Shigella sonnei (strain Ss046), this protein is HTH-type transcriptional regulator MalT.